Here is a 465-residue protein sequence, read N- to C-terminus: 3-isopropylmalate dehydratase large subunit (465 aa).

Cysteine 347, cysteine 407, and cysteine 410 together coordinate [4Fe-4S] cluster.

Belongs to the aconitase/IPM isomerase family. LeuC type 1 subfamily. As to quaternary structure, heterodimer of LeuC and LeuD. Requires [4Fe-4S] cluster as cofactor.

It carries out the reaction (2R,3S)-3-isopropylmalate = (2S)-2-isopropylmalate. The protein operates within amino-acid biosynthesis; L-leucine biosynthesis; L-leucine from 3-methyl-2-oxobutanoate: step 2/4. Its function is as follows. Catalyzes the isomerization between 2-isopropylmalate and 3-isopropylmalate, via the formation of 2-isopropylmaleate. The chain is 3-isopropylmalate dehydratase large subunit from Aeromonas hydrophila subsp. hydrophila (strain ATCC 7966 / DSM 30187 / BCRC 13018 / CCUG 14551 / JCM 1027 / KCTC 2358 / NCIMB 9240 / NCTC 8049).